The sequence spans 254 residues: Very-long-chain (3R)-3-hydroxyacyl-CoA dehydratase 2 (254 aa).

An N-acetylalanine modification is found at A2. Residues 2–41 (AAVAATAAAKGNGGGGGRAGAGDASGTRKKKGPGPLATAY) are Cytoplasmic-facing. Positions 11–33 (KGNGGGGGRAGAGDASGTRKKKG) are disordered. Residues 12–21 (GNGGGGGRAG) show a composition bias toward gly residues. A helical transmembrane segment spans residues 42–60 (LVIYNVVMTAGWLVIAVGL). Topologically, residues 61 to 79 (VRAYLAKGSYHSLYYSIEK) are lumenal. Residues 80 to 97 (PLKFFQTGALLEILHCAI) form a helical membrane-spanning segment. Residues 98 to 107 (GIVPSSVVLT) lie on the Cytoplasmic side of the membrane. Residues 108 to 125 (SFQVMSRVFLIWAVTHSV) form a helical membrane-spanning segment. Residues 126–130 (KEVQS) are Lumenal-facing. The chain crosses the membrane as a helical span at residues 131–146 (EDSVLLFVIAWTITEI). Residues 147-169 (IRYSFYTFSLLNHLPYLIKWARY) are Cytoplasmic-facing. A helical transmembrane segment spans residues 170–187 (TLFIVLYPMGVSGELLTI). Active-site residues include Y176 and E183. The Lumenal portion of the chain corresponds to 188–217 (YAALPFVRQAGLYSISLPNKYNFSFDYYAF). A may be involved in interaction with TECR region spans residues 198 to 214 (GLYSISLPNKYNFSFDY). N-linked (GlcNAc...) asparagine glycosylation occurs at N209. Residues 218–235 (LILIMISYIPIFPQLYFH) traverse the membrane as a helical segment. Over 236–254 (MIHQRRKILSHTEEHKKFE) the chain is Cytoplasmic.

It belongs to the very long-chain fatty acids dehydratase HACD family. May interact with enzymes of the ELO family (including ELOVL1); with those enzymes that mediate condensation, the first of the four steps of the reaction cycle responsible for fatty acids elongation, may be part of a larger fatty acids elongase complex. Interacts with BCAP31. Interacts (via the third lumenal loop) with TECR. Highly expressed in testis, spleen, prostate, colon and heart, followed by moderate expression in thymus, ovary, small intestine, peripheral blood leukocytes, liver, skeletal muscle and pancreas. Weakly detected in kidney, placenta, brain and lung.

The protein localises to the endoplasmic reticulum membrane. It carries out the reaction a very-long-chain (3R)-3-hydroxyacyl-CoA = a very-long-chain (2E)-enoyl-CoA + H2O. The enzyme catalyses (3R)-hydroxyhexadecanoyl-CoA = (2E)-hexadecenoyl-CoA + H2O. The catalysed reaction is (3R)-hydroxyoctadecanoyl-CoA = (2E)-octadecenoyl-CoA + H2O. It catalyses the reaction (3R)-hydroxyeicosanoyl-CoA = (2E)-eicosenoyl-CoA + H2O. It carries out the reaction (3R)-hydroxydocosanoyl-CoA = (2E)-docosenoyl-CoA + H2O. The enzyme catalyses (3R)-hydroxytetracosanoyl-CoA = (2E)-tetracosenoyl-CoA + H2O. The catalysed reaction is (3R)-hydroxyhexacosanoyl-CoA = (2E)-hexacosenoyl-CoA + H2O. It functions in the pathway lipid metabolism; fatty acid biosynthesis. In terms of biological role, catalyzes the third of the very long-chain fatty acids (VLCFA) elongation four-step cycle (condensation, reduction, dehydration, and reduction). This endoplasmic reticulum-elongation process is characterized by the addition of two carbons to the lipid chain through each cycle. This enzyme catalyzes the dehydration of the 3-hydroxyacyl-CoA intermediate into trans-2,3-enoyl-CoA, within each cycle of elongation. Therefore, it participates in the production of various VLCFAs involved in multiple biological processes as precursors of membrane lipids and lipid mediators. This Homo sapiens (Human) protein is Very-long-chain (3R)-3-hydroxyacyl-CoA dehydratase 2.